The primary structure comprises 551 residues: Cytochrome c oxidase subunit 1 (551 aa).

The chain crosses the membrane as a helical span at residues 29–49; that stretch reads VIGIQYLVTSFLFFFIGGSFA. Residue H76 coordinates Fe(II)-heme a. 11 consecutive transmembrane segments (helical) span residues 79 to 99, 113 to 133, 156 to 176, 205 to 225, 245 to 265, 283 to 303, 313 to 333, 348 to 368, 382 to 402, 424 to 444, and 466 to 486; these read IMIFLWIVPAGAAFANYLIPL, AVAFWLTPPGGILLISSFFVG, LWILSLLLVGTSSILGAINFV, LILLSTPVLASALILLSFDLI, LFWFYSHPAVYIMILPFFGVI, IAYSSLAISFLGLIVWAHHMF, MFFMATTMLIAVPTGIKIFSW, MLFAFGFLSSFMIGGLTGVMV, FVVGHFHYVLFGGSAFALFSG, FILTFIGMNLTFMPMHELGLM, and IGAYVLAASTIPFVINVFWSL. H251, Y255, H300, and H301 together coordinate Cu cation. Positions 251-255 form a cross-link, 1'-histidyl-3'-tyrosine (His-Tyr); that stretch reads HPAVY. Position 386 (H386) interacts with heme a3. H388 serves as a coordination point for Fe(II)-heme a.

Belongs to the heme-copper respiratory oxidase family. The cofactor is Cu(2+). It depends on heme as a cofactor.

The protein resides in the cell membrane. It catalyses the reaction 4 Fe(II)-[cytochrome c] + O2 + 8 H(+)(in) = 4 Fe(III)-[cytochrome c] + 2 H2O + 4 H(+)(out). Its pathway is energy metabolism; oxidative phosphorylation. Functionally, cytochrome c oxidase is the component of the respiratory chain that catalyzes the reduction of oxygen to water. Subunits 1-3 form the functional core of the enzyme complex. CO I is the catalytic subunit of the enzyme. Electrons originating in cytochrome c are transferred via the copper A center of subunit 2 and heme A of subunit 1 to the bimetallic center formed by heme A3 and copper B. The polypeptide is Cytochrome c oxidase subunit 1 (ctaD) (Synechocystis sp. (strain ATCC 27184 / PCC 6803 / Kazusa)).